We begin with the raw amino-acid sequence, 152 residues long: Troponin C (152 aa).

Thr1 is subject to N-acetylthreonine. 4 consecutive EF-hand domains span residues 9-44 (KQILDAKQAFCNVDKKKEGTVSCKDLGAIFKSLGLL), 45-80 (VKDDKIKDWSDEMDEEATGRLNCDAWIQLFERKLKE), 82-117 (LDERELKEAFRVLDKEKKGVIKVDVLRWILSSLGDE), and 118-152 (LTEEEIENMIAETDTDGSGTVDYEEFKCLMMSSDA). Positions 131, 133, 135, 137, and 142 each coordinate Ca(2+).

The protein belongs to the troponin C family.

Troponin is the central regulatory protein of striated muscle contraction. Tn consists of three components: Tn-I which is the inhibitor of actomyosin ATPase, Tn-T which contains the binding site for tropomyosin and Tn-C. The binding of calcium to Tn-C abolishes the inhibitory action of Tn on actin filaments. This is Troponin C from Mizuhopecten yessoensis (Japanese scallop).